The primary structure comprises 163 residues: D-aminoacyl-tRNA deacylase (163 aa).

The short motif at 141–142 is the Gly-cisPro motif, important for rejection of L-amino acids element; it reads GP.

Belongs to the DTD family. In terms of assembly, homodimer.

The protein localises to the cytoplasm. The catalysed reaction is glycyl-tRNA(Ala) + H2O = tRNA(Ala) + glycine + H(+). It carries out the reaction a D-aminoacyl-tRNA + H2O = a tRNA + a D-alpha-amino acid + H(+). An aminoacyl-tRNA editing enzyme that deacylates mischarged D-aminoacyl-tRNAs. Also deacylates mischarged glycyl-tRNA(Ala), protecting cells against glycine mischarging by AlaRS. Acts via tRNA-based rather than protein-based catalysis; rejects L-amino acids rather than detecting D-amino acids in the active site. By recycling D-aminoacyl-tRNA to D-amino acids and free tRNA molecules, this enzyme counteracts the toxicity associated with the formation of D-aminoacyl-tRNA entities in vivo and helps enforce protein L-homochirality. In Neisseria meningitidis serogroup A / serotype 4A (strain DSM 15465 / Z2491), this protein is D-aminoacyl-tRNA deacylase.